The primary structure comprises 444 residues: 23S rRNA (uracil(1939)-C(5))-methyltransferase RlmD (444 aa).

Residues 5–67 (RSRIDRTPFQ…RHFDEARTVE (63 aa)) form the TRAM domain. Positions 80, 86, 89, and 168 each coordinate [4Fe-4S] cluster. Residues Gln-276, Phe-305, Asn-310, Glu-326, Asp-353, and Asp-374 each coordinate S-adenosyl-L-methionine. Catalysis depends on Cys-400, which acts as the Nucleophile.

This sequence belongs to the class I-like SAM-binding methyltransferase superfamily. RNA M5U methyltransferase family. RlmD subfamily.

The enzyme catalyses uridine(1939) in 23S rRNA + S-adenosyl-L-methionine = 5-methyluridine(1939) in 23S rRNA + S-adenosyl-L-homocysteine + H(+). In terms of biological role, catalyzes the formation of 5-methyl-uridine at position 1939 (m5U1939) in 23S rRNA. This Stenotrophomonas maltophilia (strain R551-3) protein is 23S rRNA (uracil(1939)-C(5))-methyltransferase RlmD.